The primary structure comprises 427 residues: UDP-N-acetylglucosamine 1-carboxyvinyltransferase (427 aa).

Phosphoenolpyruvate is bound at residue 22 to 23 (KN). Arg99 contributes to the UDP-N-acetyl-alpha-D-glucosamine binding site. The active-site Proton donor is Cys123. Cys123 is modified (2-(S-cysteinyl)pyruvic acid O-phosphothioketal). Residues 128 to 132 (RPIDL), Asp313, and Ile335 each bind UDP-N-acetyl-alpha-D-glucosamine.

It belongs to the EPSP synthase family. MurA subfamily.

It localises to the cytoplasm. It carries out the reaction phosphoenolpyruvate + UDP-N-acetyl-alpha-D-glucosamine = UDP-N-acetyl-3-O-(1-carboxyvinyl)-alpha-D-glucosamine + phosphate. It functions in the pathway cell wall biogenesis; peptidoglycan biosynthesis. Cell wall formation. Adds enolpyruvyl to UDP-N-acetylglucosamine. This Sphingopyxis alaskensis (strain DSM 13593 / LMG 18877 / RB2256) (Sphingomonas alaskensis) protein is UDP-N-acetylglucosamine 1-carboxyvinyltransferase.